A 389-amino-acid polypeptide reads, in one-letter code: S-adenosylmethionine synthase (389 aa).

Residue H17 participates in ATP binding. D19 contacts Mg(2+). A K(+)-binding site is contributed by E45. Positions 58 and 101 each coordinate L-methionine. Residues 101–111 are flexible loop; sequence QSPDIAQGVNP. ATP is bound by residues 168-170, 234-235, D243, 249-250, and K270; these read DGK, RF, and RK. Position 243 (D243) interacts with L-methionine. Position 274 (K274) interacts with L-methionine.

The protein belongs to the AdoMet synthase family. In terms of assembly, homotetramer; dimer of dimers. Requires Mg(2+) as cofactor. The cofactor is K(+).

It localises to the cytoplasm. The catalysed reaction is L-methionine + ATP + H2O = S-adenosyl-L-methionine + phosphate + diphosphate. The protein operates within amino-acid biosynthesis; S-adenosyl-L-methionine biosynthesis; S-adenosyl-L-methionine from L-methionine: step 1/1. In terms of biological role, catalyzes the formation of S-adenosylmethionine (AdoMet) from methionine and ATP. The overall synthetic reaction is composed of two sequential steps, AdoMet formation and the subsequent tripolyphosphate hydrolysis which occurs prior to release of AdoMet from the enzyme. This is S-adenosylmethionine synthase from Syntrophobacter fumaroxidans (strain DSM 10017 / MPOB).